We begin with the raw amino-acid sequence, 458 residues long: F-box/FBD/LRR-repeat protein At1g78750 (458 aa).

One can recognise an F-box domain in the interval 17 to 67 (VDWISNLPETLLCQVLFYLPTKDVVKSSVLSSRWRNLWKYVPGFNLSYCDF). LRR repeat units follow at residues 152–183 (CETL…HLSI), 184–209 (VKFA…NINR), 231–258 (VADT…RLSD), 302–327 (DFLV…YDYS), and 345–370 (FYGY…VVGS). The FBD domain maps to 376–428 (KEGINILSVPRGFLSSLEYVKIERPLKGEAMEMKLVSYLLENSTILKKLTLCL).

The polypeptide is F-box/FBD/LRR-repeat protein At1g78750 (Arabidopsis thaliana (Mouse-ear cress)).